We begin with the raw amino-acid sequence, 286 residues long: Nucleotide-binding protein VC0395_A2112/VC395_2645 (286 aa).

Residue 8 to 15 (GQSGAGKS) coordinates ATP. A GTP-binding site is contributed by 56–59 (DIRN).

The protein belongs to the RapZ-like family.

Its function is as follows. Displays ATPase and GTPase activities. The protein is Nucleotide-binding protein VC0395_A2112/VC395_2645 of Vibrio cholerae serotype O1 (strain ATCC 39541 / Classical Ogawa 395 / O395).